A 300-amino-acid polypeptide reads, in one-letter code: Putative S-adenosyl-L-methionine-dependent methyltransferase MMAR_1058 (300 aa).

S-adenosyl-L-methionine is bound by residues Asp127 and 156-157; that span reads DL.

This sequence belongs to the UPF0677 family.

Its function is as follows. Exhibits S-adenosyl-L-methionine-dependent methyltransferase activity. The sequence is that of Putative S-adenosyl-L-methionine-dependent methyltransferase MMAR_1058 from Mycobacterium marinum (strain ATCC BAA-535 / M).